A 132-amino-acid polypeptide reads, in one-letter code: uncharacterized protein (132 aa).

3 consecutive transmembrane segments (helical) span residues 28–48 (LLRLISLCIPIIRPFSFLIYP), 59–79 (ILPSILPIIPFAISSSLLFSY), and 106–126 (LLVASFVYLPYRSPLPVVIEI).

The protein resides in the membrane. This is an uncharacterized protein from Schizosaccharomyces pombe (strain 972 / ATCC 24843) (Fission yeast).